The chain runs to 466 residues: Asparagine--tRNA ligase (466 aa).

The protein belongs to the class-II aminoacyl-tRNA synthetase family. As to quaternary structure, homodimer.

It localises to the cytoplasm. The catalysed reaction is tRNA(Asn) + L-asparagine + ATP = L-asparaginyl-tRNA(Asn) + AMP + diphosphate + H(+). The sequence is that of Asparagine--tRNA ligase from Shewanella pealeana (strain ATCC 700345 / ANG-SQ1).